A 185-amino-acid chain; its full sequence is ATP-dependent protease subunit HslV (185 aa).

T12 is a catalytic residue. Positions 168, 171, and 174 each coordinate Na(+).

Belongs to the peptidase T1B family. HslV subfamily. As to quaternary structure, a double ring-shaped homohexamer of HslV is capped on each side by a ring-shaped HslU homohexamer. The assembly of the HslU/HslV complex is dependent on binding of ATP.

It localises to the cytoplasm. The catalysed reaction is ATP-dependent cleavage of peptide bonds with broad specificity.. Its activity is regulated as follows. Allosterically activated by HslU binding. Functionally, protease subunit of a proteasome-like degradation complex believed to be a general protein degrading machinery. This is ATP-dependent protease subunit HslV from Ruegeria pomeroyi (strain ATCC 700808 / DSM 15171 / DSS-3) (Silicibacter pomeroyi).